The primary structure comprises 98 residues: U1-theraphotoxin-Ap1a (98 aa).

The signal sequence occupies residues 1–23 (MRSLTLAAVLACSLLLVFHTSAA). Residues 24–50 (EELEVQDGHLMNPGDGDTALATVDDER) constitute a propeptide that is removed on maturation. Intrachain disulfides connect C54/C84, C58/C90, and C72/C95. Residues 63 to 84 (DGKSKEGKPCKPKGDKNKDKKC) are disordered.

Belongs to the neurotoxin 12 (Hwtx-2) family. 01 (Ap1a) subfamily. In terms of tissue distribution, expressed by the venom gland.

Its subcellular location is the secreted. In terms of biological role, is toxic to both insects and mammals. Induces reversible paralysis when injected into S.frugiperda larvae. Reduces both the amplitude and frequency of responses from muscle (GF-TTM and GF-DLM) pathways in the D.melanogaster giant fiber circuit, suggesting an action at the neuromuscular junction, which is mediated by glutamatergic receptors. In mice, intracranial injection of 30 ug causes increased urination, myoclonus, hypermotility with circular movements followed by respiratory and generalized seizures resulting in death within 25-35 minutes of injection. The sequence is that of U1-theraphotoxin-Ap1a from Acanthoscurria paulensis (Brazilian giant black tarantula spider).